A 462-amino-acid polypeptide reads, in one-letter code: uncharacterized protein (462 aa).

Belongs to the IIV-6 329R family.

This is an uncharacterized protein from Aedes vexans (Inland floodwater mosquito).